The following is a 748-amino-acid chain: Transducin-like enhancer protein 4 (748 aa).

Disordered regions lie at residues 1-20 (MIRDLSKMYRRRAHPAPHQP) and 157-332 (LPIK…DPLA). Positions 1–112 (MIRDLSKMYR…SQEQQQLQAQ (112 aa)) are q domain. The tract at residues 113 to 179 (HLLTWTWSAC…HQRDRDSIKS (67 aa)) is GP domain. Residues 158–177 (PIKDEKKHHDNDHQRDRDSI) show a composition bias toward basic and acidic residues. Over residues 178–189 (KSSSVSPSASFR) the composition is skewed to low complexity. Positions 180 to 249 (SSVSPSASFR…SPRGSPAHSP (70 aa)) are ccN domain. Residues S183, S187, S191, and S197 each carry the phosphoserine modification. The span at 190–227 (GSEKHRNSTDYSSESKKQKTEEKEIAARYDSDGEKSDD) shows a compositional bias: basic and acidic residues. An N6-acetyllysine modification is found at K212. S220 carries the phosphoserine modification. Position 225 is a phosphoserine; by CK2 (S225). S240 is subject to Phosphoserine; by CDK1. Phosphoserine occurs at positions 244 and 248. Over residues 248–264 (SPRENGLDKTRLLKKDA) the composition is skewed to basic and acidic residues. Positions 250-427 (RENGLDKTRL…PGGKPAYSFH (178 aa)) are SP domain. N6-acetyllysine is present on K256. Low complexity predominate over residues 265-280 (PISPASVASSSSTPSS). S267 is subject to Phosphoserine. Positions 292 to 303 (TTPVSKSNTPTP) are enriched in polar residues. A Phosphothreonine modification is found at T293. Phosphoserine occurs at positions 296 and 298. A phosphothreonine mark is found at T300, T302, T309, and T315. Residue S394 is modified to Phosphoserine. 7 WD repeats span residues 460 to 498 (NHGEVVCAVTISNPTRHVYTGGKGCVKVWDITDPGNKSP), 506 to 545 (NRDNYIRSCRLLPDGRTLIVGGEASTLSIWDLAAPTPRIK), 550 to 589 (SSAPACYALAISPDSKVCFSCCSDGNIAVWDLHNQTLVRQ), 592 to 631 (GHTDGASCIDISNDGTKLWTGGLDNTVRSWDLREGRQLQQ), 633 to 672 (DFTSQIFSLGYCPTGEWLAVGMENSNVEVLHVTKPDKYQL), 674 to 713 (LHESCVLSLKFAHCGKWFVRPGKDNLLNAWRTPYGASIFQ), and 715 to 748 (KESSSVLSCDISADDKYIVTGSGDKKATVYEVIY).

It belongs to the WD repeat Groucho/TLE family. In terms of assembly, homooligomer and heterooligomer with other family members. Binds PAX5, LEF1, TCF7, TCF7L1 and TCF7L2. Interacts with ZNF703; TLE4 may mediate ZNF703 transcriptional repression. Interacts with SIX3 and SIX6. Interacts with PAX2. Post-translationally, phosphorylated. PAX5 binding increases phosphorylation. In terms of processing, ubiquitinated by XIAP/BIRC4.

It localises to the nucleus. Transcriptional corepressor that binds to a number of transcription factors. Inhibits the transcriptional activation mediated by PAX5, and by CTNNB1 and TCF family members in Wnt signaling. The effects of full-length TLE family members may be modulated by association with dominant-negative AES. Essential for the transcriptional repressor activity of SIX3 during retina and lens development and for SIX3 transcriptional auto-repression. Involved in transcriptional repression of GNRHR and enhances MSX1-mediated transcriptional repression of CGA/alpha-GSU. The protein is Transducin-like enhancer protein 4 (Tle4) of Rattus norvegicus (Rat).